The primary structure comprises 213 residues: Urease accessory protein UreG (213 aa).

10–17 is a GTP binding site; the sequence is GPVGSGKT.

This sequence belongs to the SIMIBI class G3E GTPase family. UreG subfamily. Homodimer. UreD, UreF and UreG form a complex that acts as a GTP-hydrolysis-dependent molecular chaperone, activating the urease apoprotein by helping to assemble the nickel containing metallocenter of UreC. The UreE protein probably delivers the nickel.

It localises to the cytoplasm. Its function is as follows. Facilitates the functional incorporation of the urease nickel metallocenter. This process requires GTP hydrolysis, probably effectuated by UreG. This chain is Urease accessory protein UreG, found in Deinococcus radiodurans (strain ATCC 13939 / DSM 20539 / JCM 16871 / CCUG 27074 / LMG 4051 / NBRC 15346 / NCIMB 9279 / VKM B-1422 / R1).